The sequence spans 634 residues: DNA-directed RNA polymerase subunit gamma (634 aa).

Zn(2+) contacts are provided by C74, C76, C89, and C92. Mg(2+)-binding residues include D471, D473, and D475.

This sequence belongs to the RNA polymerase beta' chain family. RpoC1 subfamily. In terms of assembly, in cyanobacteria the RNAP catalytic core is composed of 2 alpha, 1 beta, 1 beta', 1 gamma and 1 omega subunit. When a sigma factor is associated with the core the holoenzyme is formed, which can initiate transcription. Mg(2+) serves as cofactor. Zn(2+) is required as a cofactor.

The enzyme catalyses RNA(n) + a ribonucleoside 5'-triphosphate = RNA(n+1) + diphosphate. Its function is as follows. DNA-dependent RNA polymerase catalyzes the transcription of DNA into RNA using the four ribonucleoside triphosphates as substrates. The protein is DNA-directed RNA polymerase subunit gamma of Prochlorococcus marinus (strain MIT 9313).